Reading from the N-terminus, the 699-residue chain is Chitinase A1 (699 aa).

The N-terminal stretch at 1 to 41 is a signal peptide; it reads MINLNKHTAFKKTAKFFLGLSLLLSVIVPSFALQPATAEAA. The GH18 domain occupies 44–454; sequence YKIVGYYPSW…NKLKADLPTG (411 aa). Chitin is bound by residues 135–136 and 162–165; these read DQ and GGWT. The active-site Proton donor is the E204. Residues Y205, 277–280, and W433 contribute to the chitin site; that span reads MTYD. The segment at 449–471 is disordered; that stretch reads ADLPTGGTVPPVDTTAPSVPGNA. Residues 452-465 are compositionally biased toward low complexity; that stretch reads PTGGTVPPVDTTAP. Fibronectin type-III domains are found at residues 467–553 and 562–647; these read VPGN…TAQP and APTN…TAAE.

Belongs to the glycosyl hydrolase 18 family. Chitinase class II subfamily.

The enzyme catalyses Random endo-hydrolysis of N-acetyl-beta-D-glucosaminide (1-&gt;4)-beta-linkages in chitin and chitodextrins.. This chain is Chitinase A1 (chiA1), found in Niallia circulans (Bacillus circulans).